A 144-amino-acid polypeptide reads, in one-letter code: Histone H2B.2, sperm (144 aa).

The tract at residues 1–51 (MPRSPSKTSPRKGSPRRGSPSRKASPKRGGKGAKRAGKGGRRRNVVRRRRR) is disordered. 5 short sequence motifs (SPKK motif) span residues 4–7 (SPSK), 9–12 (SPRK), 14–17 (SPRR), 19–22 (SPSR), and 25–28 (SPKR). Phosphoserine occurs at positions 14, 19, and 25. Residues 24-51 (ASPKRGGKGAKRAGKGGRRRNVVRRRRR) show a composition bias toward basic residues. O-linked (GlcNAc) serine glycosylation occurs at Ser-131. Residue Lys-139 forms a Glycyl lysine isopeptide (Lys-Gly) (interchain with G-Cter in ubiquitin) linkage.

Belongs to the histone H2B family. The nucleosome is a histone octamer containing two molecules each of H2A, H2B, H3 and H4 assembled in one H3-H4 heterotetramer and two H2A-H2B heterodimers. The octamer wraps approximately 147 bp of DNA. Monoubiquitination of Lys-139 gives a specific tag for epigenetic transcriptional activation and is also prerequisite for histone H3 'Lys-4' and 'Lys-79' methylation. Post-translationally, phosphorylated on SPKK motifs 3, 4 and 5; which may regulate DNA binding. Dephosphorylated during maturation of spermatids to mature sperm and rephosphorylated at fertilization. In terms of processing, glcNAcylation at Ser-131 promotes monoubiquitination of Lys-139. It fluctuates in response to extracellular glucose, and associates with transcribed genes.

The protein resides in the nucleus. The protein localises to the chromosome. In terms of biological role, core component of nucleosome. Nucleosomes wrap and compact DNA into chromatin, limiting DNA accessibility to the cellular machineries which require DNA as a template. Histones thereby play a central role in transcription regulation, DNA repair, DNA replication and chromosomal stability. DNA accessibility is regulated via a complex set of post-translational modifications of histones, also called histone code, and nucleosome remodeling. The sequence is that of Histone H2B.2, sperm from Strongylocentrotus purpuratus (Purple sea urchin).